The primary structure comprises 663 residues: Alpha-1,4-glucan:maltose-1-phosphate maltosyltransferase (663 aa).

A disordered region spans residues 238-266; that stretch reads IGETNRKGPDDAPEAGPDDPGSPWAIGGF. The alpha-maltose 1-phosphate site is built by lysine 244, glutamine 309, and aspartate 344. Aspartate 380 functions as the Nucleophile in the catalytic mechanism. Asparagine 381 contributes to the alpha-maltose 1-phosphate binding site. Glutamate 409 functions as the Proton donor in the catalytic mechanism. Position 521–522 (521–522) interacts with alpha-maltose 1-phosphate; sequence KY.

Belongs to the glycosyl hydrolase 13 family. GlgE subfamily. As to quaternary structure, homodimer.

The catalysed reaction is alpha-maltose 1-phosphate + [(1-&gt;4)-alpha-D-glucosyl](n) = [(1-&gt;4)-alpha-D-glucosyl](n+2) + phosphate. Functionally, maltosyltransferase that uses maltose 1-phosphate (M1P) as the sugar donor to elongate linear or branched alpha-(1-&gt;4)-glucans. Is involved in a branched alpha-glucan biosynthetic pathway from trehalose, together with TreS, Mak and GlgB. The polypeptide is Alpha-1,4-glucan:maltose-1-phosphate maltosyltransferase (Salinibacter ruber (strain DSM 13855 / M31)).